The following is a 240-amino-acid chain: Lysoplasmalogenase TMEM86A (240 aa).

The Cytoplasmic portion of the chain corresponds to 1-21; it reads MVSPVTVVKSEGPKLVPFFKA. The helical transmembrane segment at 22-42 threads the bilayer; that stretch reads TCVYFVLWLPSSSPSWVSTLI. Residue K43 is a topological domain, extracellular. Residues 44–64 traverse the membrane as a helical segment; it reads CLPIFCLWLFLLAHGLGFLLA. Topologically, residues 65 to 70 are cytoplasmic; sequence HPSATR. The chain crosses the membrane as a helical span at residues 71–91; sequence IFVGLVFSAVGDAFLIWQDQG. Y92 is a topological domain (extracellular). Residues 93 to 113 form a helical membrane-spanning segment; sequence FVHGLLMFAVTHMFYASAFGM. The Cytoplasmic portion of the chain corresponds to 114–115; that stretch reads QP. A helical transmembrane segment spans residues 116–136; the sequence is LALRTGLVMAALSGLCYALLY. The Extracellular portion of the chain corresponds to 137 to 138; that stretch reads PC. Residues 139 to 159 traverse the membrane as a helical segment; it reads LSGAFTYLVGVYVALIGFMGW. The Cytoplasmic segment spans residues 160–174; that stretch reads RAMAGLRLAGADWRW. A helical membrane pass occupies residues 175-195; that stretch reads TELAAGSGALFFIISDLTIAL. Residues 196 to 206 are Extracellular-facing; that stretch reads NKFCFPVPYSR. A helical membrane pass occupies residues 207–227; it reads ALIMSTYYVAQMLVALSAVES. Topologically, residues 228–240 are cytoplasmic; sequence REPVEHYRLTKAN.

Belongs to the TMEM86 family. Expressed in the macrophages.

It localises to the endoplasmic reticulum membrane. The enzyme catalyses a 1-O-(1Z-alkenyl)-sn-glycero-3-phosphocholine + H2O = a 2,3-saturated aldehyde + sn-glycerol 3-phosphocholine. It catalyses the reaction a 1-O-(1Z-alkenyl)-sn-glycero-3-phosphoethanolamine + H2O = a 2,3-saturated aldehyde + sn-glycero-3-phosphoethanolamine. Its function is as follows. Catalyzes the hydrolysis of the vinyl ether bond of choline or ethanolamine lysoplasmalogens, forming fatty aldehyde and glycerophosphocholine or glycerophosphoethanolamine, respectively and is specific for the sn-2-deacylated (lyso) form of plasmalogen. Plays an important role in lysoplasmalogen metabolism in the adipocyte tissue and macrophages. In Homo sapiens (Human), this protein is Lysoplasmalogenase TMEM86A (TMEM86A).